Consider the following 722-residue polypeptide: Biotin--protein ligase (722 aa).

Residues K27–L93 are disordered. Residues A46–G55 are compositionally biased toward low complexity. S295 bears the Phosphoserine mark. Residues T459–Q648 form the BPL/LPL catalytic domain.

The protein belongs to the biotin--protein ligase family. Monomer.

Its subcellular location is the cytoplasm. It is found in the mitochondrion. It catalyses the reaction apo-[methylmalonyl-CoA:pyruvate carboxytransferase] + biotin + ATP = holo-[methylmalonyl-CoA:pyruvate carboxytransferase] + AMP + diphosphate + H(+). It carries out the reaction apo-[propionyl-CoA:carbon-dioxide ligase (ADP-forming)] + biotin + ATP = holo-[propionyl-CoA:carbon-dioxide ligase (ADP-forming)] + AMP + diphosphate + H(+). The catalysed reaction is apo-[3-methylcrotonoyl-CoA:carbon-dioxide ligase (ADP-forming)] + biotin + ATP = holo-[3-methylcrotonoyl-CoA:carbon-dioxide ligase (ADP-forming)] + AMP + diphosphate + H(+). The enzyme catalyses biotin + L-lysyl-[protein] + ATP = N(6)-biotinyl-L-lysyl-[protein] + AMP + diphosphate + H(+). Biotin--protein ligase catalyzing the biotinylation of the 4 biotin-dependent carboxylases acetyl-CoA-carboxylase, pyruvate carboxylase, propionyl-CoA carboxylase, and methylcrotonyl-CoA carboxylase. The polypeptide is Biotin--protein ligase (Mus musculus (Mouse)).